The chain runs to 492 residues: Protein adenylyltransferase Fic (492 aa).

Over residues 1–17 the composition is skewed to low complexity; that stretch reads MCTEAEQPSPPAQQQEQ. Positions 1-25 are disordered; sequence MCTEAEQPSPPAQQQEQGNPPLCKA. The chain crosses the membrane as a helical span at residues 33–55; the sequence is LYRLVLLFVAGSLAAWTFHALSS. 2 TPR repeats span residues 118–151 and 152–186; these read ALGALRMAQDLYLAGKDDKAARLFEHALALAPRH and PEVLLRYGEFLEHNQRNIVLADQYYFQALTISPSN. The short motif at 243–248 is the Inhibitory (S/T)XXXE(G/N) motif element; it reads SVGIEG. Residues glutamate 247 and 328–331 each bind ATP; that span reads VGGH. A Fido domain is found at 297-432; the sequence is ITIKDILELH…IRPFVRFIAD (136 aa). Residue histidine 375 is part of the active site. ATP contacts are provided by residues 379–386, 411–412, and asparagine 419; these read DGNGRTSR and YY.

This sequence belongs to the fic family. Homodimer.

The protein localises to the membrane. It carries out the reaction L-tyrosyl-[protein] + ATP = O-(5'-adenylyl)-L-tyrosyl-[protein] + diphosphate. The enzyme catalyses L-threonyl-[protein] + ATP = 3-O-(5'-adenylyl)-L-threonyl-[protein] + diphosphate. It catalyses the reaction 3-O-(5'-adenylyl)-L-threonyl-[protein] + H2O = L-threonyl-[protein] + AMP + H(+). The side chain of Glu-247 determines which of the two opposing activities (AMPylase or de-AMPylase) will take place. In response to endoplasmic reticulum stress, mediates de-AMPylase activity. Adenylyltransferase activity is inhibited by the inhibitory helix present at the N-terminus: Glu-247 binds ATP and competes with ATP-binding at Arg-386, thereby preventing adenylyltransferase activity. In unstressed cells, disengagement of Glu-247 promotes adenylyltransferase activity. Activation dissociates ATP-binding from Glu-247, allowing ordered binding of the entire ATP moiety with the alpha-phosphate in an orientation that is productive for accepting an incoming target hydroxyl side chain. Its function is as follows. Protein that can both mediate the addition of adenosine 5'-monophosphate (AMP) to specific residues of target proteins (AMPylation), and the removal of the same modification from target proteins (de-AMPylation), depending on the context. The side chain of Glu-247 determines which of the two opposing activities (AMPylase or de-AMPylase) will take place. Acts as a key regulator of the unfolded protein response (UPR) by mediating AMPylation or de-AMPylation of Hsc70-3/BiP. In unstressed cells, acts as an adenylyltransferase by mediating AMPylation of Hsc70-3/BiP at 'Thr-518', thereby inactivating it. In response to endoplasmic reticulum stress, acts as a phosphodiesterase by mediating removal of ATP (de-AMPylation) from Hsc70-3/BiP at 'Thr-518', leading to restore HSPA5/BiP activity. The chain is Protein adenylyltransferase Fic from Drosophila sechellia (Fruit fly).